Reading from the N-terminus, the 167-residue chain is NAD(P)H-quinone oxidoreductase subunit I, chloroplastic (167 aa).

4Fe-4S ferredoxin-type domains follow at residues 55–84 and 95–124; these read GRIH…VDWK and LNYS…MTEE. The [4Fe-4S] cluster site is built by Cys-64, Cys-67, Cys-70, Cys-74, Cys-104, Cys-107, Cys-110, and Cys-114.

Belongs to the complex I 23 kDa subunit family. NDH is composed of at least 16 different subunits, 5 of which are encoded in the nucleus. [4Fe-4S] cluster serves as cofactor.

It localises to the plastid. The protein localises to the chloroplast thylakoid membrane. It carries out the reaction a plastoquinone + NADH + (n+1) H(+)(in) = a plastoquinol + NAD(+) + n H(+)(out). It catalyses the reaction a plastoquinone + NADPH + (n+1) H(+)(in) = a plastoquinol + NADP(+) + n H(+)(out). Functionally, NDH shuttles electrons from NAD(P)H:plastoquinone, via FMN and iron-sulfur (Fe-S) centers, to quinones in the photosynthetic chain and possibly in a chloroplast respiratory chain. The immediate electron acceptor for the enzyme in this species is believed to be plastoquinone. Couples the redox reaction to proton translocation, and thus conserves the redox energy in a proton gradient. This chain is NAD(P)H-quinone oxidoreductase subunit I, chloroplastic, found in Solanum tuberosum (Potato).